Reading from the N-terminus, the 433-residue chain is MANIIKVIGREIMDSRGNPTVEAEVHLEGGFIGMAAAPSGASTGSREALELRDGDKARYLGKGVLKAVAAVNGPIAEALKGKDALAQAELDQIMIDLDGTENKAKFGANAILAVSLAVAKAAADAKHVPLYAHIADLNGTPGVYSMPLPMMNIINGGEHADNSVDIQEFMIQPVGAKTFREGLRMGAEVFHSLAKVLKADGHSTAVGDEGGFAPNLASNEAALAAIKVAVANAGYELGKDITLAMDCAASEFYDKEANIYDLKGEGKKFTSEEFNFFLQGLTERYPIVSIEDGLDESDWDGFAHQTKLMGDKIQLVGDDLFVTNTKILKRGIDNGIANSILIKFNQIGTLTETLAAIKMAKDAGFTVVISHRSGETEDSTIADLAVGTAAGQIKTGSLSRSDRVAKYNQLLRIEEALGSKAPYNGLKEVKGQG.

Q167 serves as a coordination point for (2R)-2-phosphoglycerate. The active-site Proton donor is E209. Mg(2+) contacts are provided by D246, E291, and D318. Positions 343, 372, 373, and 394 each coordinate (2R)-2-phosphoglycerate. K343 serves as the catalytic Proton acceptor.

This sequence belongs to the enolase family. As to quaternary structure, component of the RNA degradosome, a multiprotein complex involved in RNA processing and mRNA degradation. Requires Mg(2+) as cofactor.

The protein resides in the cytoplasm. Its subcellular location is the secreted. It is found in the cell surface. The enzyme catalyses (2R)-2-phosphoglycerate = phosphoenolpyruvate + H2O. It functions in the pathway carbohydrate degradation; glycolysis; pyruvate from D-glyceraldehyde 3-phosphate: step 4/5. Its function is as follows. Catalyzes the reversible conversion of 2-phosphoglycerate (2-PG) into phosphoenolpyruvate (PEP). It is essential for the degradation of carbohydrates via glycolysis. This chain is Enolase, found in Shewanella frigidimarina (strain NCIMB 400).